The primary structure comprises 188 residues: Deoxyuridine 5'-triphosphate nucleotidohydrolase (188 aa).

Residues 1-34 form a disordered region; the sequence is MGEMTSGVDGHGSTKRTTSEAQKMDFNTDRGSAI.

Belongs to the dUTPase family. The cofactor is Mg(2+).

The catalysed reaction is dUTP + H2O = dUMP + diphosphate + H(+). Its function is as follows. This enzyme is involved in nucleotide metabolism: it produces dUMP, the immediate precursor of thymidine nucleotides and it decreases the intracellular concentration of dUTP so that uracil cannot be incorporated into DNA. The sequence is that of Deoxyuridine 5'-triphosphate nucleotidohydrolase (49) from Ictaluridae (bullhead catfishes).